Consider the following 133-residue polypeptide: Putative elongation factor 1-delta-like protein (133 aa).

Positions 58-73 are enriched in low complexity; it reads SLAGSLGPGASSGPSG. Disordered stretches follow at residues 58–77 and 89–133; these read SLAGSLGPGASSGPSGDHSE and NQRD…TSRG. Residues 89-102 are compositionally biased toward basic and acidic residues; that stretch reads NQRDLAERAGEELA.

The protein belongs to the EF-1-beta/EF-1-delta family.

The protein is Putative elongation factor 1-delta-like protein (EEF1DP3) of Homo sapiens (Human).